Here is a 588-residue protein sequence, read N- to C-terminus: Sulfite reductase [NADPH] hemoprotein beta-component (588 aa).

[4Fe-4S] cluster contacts are provided by Cys442, Cys448, Cys487, and Cys491. Cys491 serves as a coordination point for siroheme.

The protein belongs to the nitrite and sulfite reductase 4Fe-4S domain family. Alpha(8)-beta(8). The alpha component is a flavoprotein, the beta component is a hemoprotein. Siroheme serves as cofactor. Requires [4Fe-4S] cluster as cofactor.

It catalyses the reaction hydrogen sulfide + 3 NADP(+) + 3 H2O = sulfite + 3 NADPH + 4 H(+). It functions in the pathway sulfur metabolism; hydrogen sulfide biosynthesis; hydrogen sulfide from sulfite (NADPH route): step 1/1. In terms of biological role, component of the sulfite reductase complex that catalyzes the 6-electron reduction of sulfite to sulfide. This is one of several activities required for the biosynthesis of L-cysteine from sulfate. The polypeptide is Sulfite reductase [NADPH] hemoprotein beta-component (Actinobacillus pleuropneumoniae serotype 7 (strain AP76)).